A 491-amino-acid chain; its full sequence is N-succinylglutamate 5-semialdehyde dehydrogenase (491 aa).

225–230 (GSSTVG) contributes to the NAD(+) binding site. Residues glutamate 248 and cysteine 282 contribute to the active site.

It belongs to the aldehyde dehydrogenase family. AstD subfamily.

It catalyses the reaction N-succinyl-L-glutamate 5-semialdehyde + NAD(+) + H2O = N-succinyl-L-glutamate + NADH + 2 H(+). It participates in amino-acid degradation; L-arginine degradation via AST pathway; L-glutamate and succinate from L-arginine: step 4/5. Functionally, catalyzes the NAD-dependent reduction of succinylglutamate semialdehyde into succinylglutamate. The protein is N-succinylglutamate 5-semialdehyde dehydrogenase of Marinobacter nauticus (strain ATCC 700491 / DSM 11845 / VT8) (Marinobacter aquaeolei).